We begin with the raw amino-acid sequence, 869 residues long: Valine--tRNA ligase (869 aa).

The short motif at 51 to 61 (PNVTGNLHLGH) is the 'HIGH' region element. Positions 523–527 (KMSKS) match the 'KMSKS' region motif. An ATP-binding site is contributed by K526. Residues 797-869 (EDLLGSNNEA…ELEKLLSSHK (73 aa)) adopt a coiled-coil conformation.

This sequence belongs to the class-I aminoacyl-tRNA synthetase family. ValS type 1 subfamily. Monomer.

It is found in the cytoplasm. It catalyses the reaction tRNA(Val) + L-valine + ATP = L-valyl-tRNA(Val) + AMP + diphosphate. Its function is as follows. Catalyzes the attachment of valine to tRNA(Val). As ValRS can inadvertently accommodate and process structurally similar amino acids such as threonine, to avoid such errors, it has a 'posttransfer' editing activity that hydrolyzes mischarged Thr-tRNA(Val) in a tRNA-dependent manner. The protein is Valine--tRNA ligase of Malacoplasma penetrans (strain HF-2) (Mycoplasma penetrans).